Reading from the N-terminus, the 521-residue chain is GMP synthase [glutamine-hydrolyzing] (521 aa).

Residues 10 to 204 (SLLILDFGSQ…ALGICGCEND (195 aa)) form the Glutamine amidotransferase type-1 domain. Catalysis depends on Cys87, which acts as the Nucleophile. Active-site residues include His178 and Glu180. The region spanning 205-396 (WNMHNFAEEQ…LGMPREMLMR (192 aa)) is the GMPS ATP-PPase domain. 232–238 (SGGVDSS) contributes to the ATP binding site.

As to quaternary structure, homodimer.

It catalyses the reaction XMP + L-glutamine + ATP + H2O = GMP + L-glutamate + AMP + diphosphate + 2 H(+). It functions in the pathway purine metabolism; GMP biosynthesis; GMP from XMP (L-Gln route): step 1/1. In terms of biological role, catalyzes the synthesis of GMP from XMP. The polypeptide is GMP synthase [glutamine-hydrolyzing] (Wolinella succinogenes (strain ATCC 29543 / DSM 1740 / CCUG 13145 / JCM 31913 / LMG 7466 / NCTC 11488 / FDC 602W) (Vibrio succinogenes)).